The following is an 806-amino-acid chain: G-type lectin S-receptor-like serine/threonine-protein kinase At1g61430 (806 aa).

Residues 1–24 (MGKKRIVFFAYLPFFTIFMSFSFA) form the signal peptide. The Bulb-type lectin domain occupies 25 to 144 (GITKESPFSI…VSGRTLWQSF (120 aa)). Residues 25 to 425 (GITKESPFSI…ELDVNKRKMT (401 aa)) are Extracellular-facing. N-linked (GlcNAc...) asparagine glycosylation is found at Asn53, Asn94, Asn117, and Asn236. In terms of domain architecture, EGF-like spans 277–313 (PANSCDIYGVCGPFGLCVVSIPPKCKCFKGFVPKFAK). Cystine bridges form between Cys281/Cys293 and Cys287/Cys301. N-linked (GlcNAc...) asparagine glycans are attached at residues Asn319, Asn335, and Asn374. The PAN domain maps to 332-414 (CQGNSSGKDA…GELLSIRLAR (83 aa)). Intrachain disulfides connect Cys367–Cys388 and Cys371–Cys377. A helical transmembrane segment spans residues 426 to 446 (IVASTVSLTLFVIFGFAAFGF). The Cytoplasmic segment spans residues 447-806 (WRCRVEHNAH…EMTESVIQGR (360 aa)). Residues 489 to 777 (FSLSNKLGPG…DLPLPKKPTF (289 aa)) enclose the Protein kinase domain. Residues 495–503 (LGPGGFGSV) and Lys520 contribute to the ATP site. Phosphoserine is present on residues Ser526 and Ser541. The interval 581-598 (RKKLELDWPKRFEIIEGI) is caM-binding. The active-site Proton acceptor is Asp617. A phosphoserine mark is found at Ser621 and Ser634. Thr651 is modified (phosphothreonine). A phosphoserine mark is found at Ser694, Ser695, and Ser788.

Belongs to the protein kinase superfamily. Ser/Thr protein kinase family.

It localises to the cell membrane. It carries out the reaction L-seryl-[protein] + ATP = O-phospho-L-seryl-[protein] + ADP + H(+). The catalysed reaction is L-threonyl-[protein] + ATP = O-phospho-L-threonyl-[protein] + ADP + H(+). This chain is G-type lectin S-receptor-like serine/threonine-protein kinase At1g61430, found in Arabidopsis thaliana (Mouse-ear cress).